Here is a 450-residue protein sequence, read N- to C-terminus: V-type proton ATPase subunit H (450 aa).

It belongs to the V-ATPase H subunit family. V-ATPase is a heteromultimeric enzyme composed of a peripheral catalytic V1 complex (components A to H) attached to an integral membrane V0 proton pore complex (components: a, c, c', c'', d, e, f and VOA1).

The protein localises to the vacuole membrane. In terms of biological role, subunit of the V1 complex of vacuolar(H+)-ATPase (V-ATPase), a multisubunit enzyme composed of a peripheral complex (V1) that hydrolyzes ATP and a membrane integral complex (V0) that translocates protons. V-ATPase is responsible for acidifying and maintaining the pH of intracellular compartments. This subunit is essential for activity, but not assembly, of the enzyme complex. This subunit is also required for silencing the ATPase activity of V-ATPase when V1 is detached from V0. This Schizosaccharomyces pombe (strain 972 / ATCC 24843) (Fission yeast) protein is V-type proton ATPase subunit H (vma13).